We begin with the raw amino-acid sequence, 248 residues long: Clathrin light chain A (248 aa).

Positions 1–93 (MAELDPFGAP…YQESNGPTDS (93 aa)) are disordered. The span at 13-25 (APGGPALGNGVAG) shows a compositional bias: gly residues. An involved in binding clathrin heavy chain region spans residues 100 to 162 (VDRLQSEPES…QLQKTKASNR (63 aa)). A phosphoserine mark is found at Ser105 and Ser206. Lys223 bears the N6-acetyllysine mark. The residue at position 236 (Ser236) is a Phosphoserine. Lys242 bears the N6-acetyllysine mark.

It belongs to the clathrin light chain family. Clathrin coats are formed from molecules containing 3 heavy chains and 3 light chains. Interacts with CALY; the interaction stimulates clathrin self-assembly and clathrin-mediated endocytosis. Interacts with CKAP5 and TACC3 forming the TACC3/ch-TOG/clathrin complex located at spindle inter-microtubules bridges; the complex implicates clathrin triskelions.

It is found in the cytoplasmic vesicle membrane. The protein localises to the membrane. The protein resides in the coated pit. It localises to the cytoplasm. Its subcellular location is the cytoskeleton. It is found in the spindle. Its function is as follows. Clathrin is the major protein of the polyhedral coat of coated pits and vesicles. Acts as a component of the TACC3/ch-TOG/clathrin complex proposed to contribute to stabilization of kinetochore fibers of the mitotic spindle by acting as inter-microtubule bridge. This Rattus norvegicus (Rat) protein is Clathrin light chain A (Clta).